Here is a 77-residue protein sequence, read N- to C-terminus: Acyl carrier protein (77 aa).

Residues 1 to 76 (MSLEDDVKAI…DVIKYIQERQ (76 aa)) enclose the Carrier domain. An O-(pantetheine 4'-phosphoryl)serine modification is found at Ser-36.

It belongs to the acyl carrier protein (ACP) family. Post-translationally, 4'-phosphopantetheine is transferred from CoA to a specific serine of apo-ACP by AcpS. This modification is essential for activity because fatty acids are bound in thioester linkage to the sulfhydryl of the prosthetic group.

It localises to the cytoplasm. Its pathway is lipid metabolism; fatty acid biosynthesis. Its function is as follows. Carrier of the growing fatty acid chain in fatty acid biosynthesis. This Chlamydia trachomatis serovar A (strain ATCC VR-571B / DSM 19440 / HAR-13) protein is Acyl carrier protein.